A 347-amino-acid polypeptide reads, in one-letter code: Phosphate acyltransferase (347 aa).

Belongs to the PlsX family. In terms of assembly, homodimer. Probably interacts with PlsY.

It is found in the cytoplasm. It catalyses the reaction a fatty acyl-[ACP] + phosphate = an acyl phosphate + holo-[ACP]. It functions in the pathway lipid metabolism; phospholipid metabolism. Catalyzes the reversible formation of acyl-phosphate (acyl-PO(4)) from acyl-[acyl-carrier-protein] (acyl-ACP). This enzyme utilizes acyl-ACP as fatty acyl donor, but not acyl-CoA. The sequence is that of Phosphate acyltransferase from Anaplasma marginale (strain St. Maries).